Reading from the N-terminus, the 214-residue chain is Dephospho-CoA kinase (214 aa).

Positions 20 to 214 (RIGITGGIAS…KLQLKKLYKF (195 aa)) constitute a DPCK domain. 28–33 (ASGKTI) is a binding site for ATP.

This sequence belongs to the CoaE family.

The protein resides in the cytoplasm. The enzyme catalyses 3'-dephospho-CoA + ATP = ADP + CoA + H(+). Its pathway is cofactor biosynthesis; coenzyme A biosynthesis; CoA from (R)-pantothenate: step 5/5. Its function is as follows. Catalyzes the phosphorylation of the 3'-hydroxyl group of dephosphocoenzyme A to form coenzyme A. The sequence is that of Dephospho-CoA kinase from Prochlorococcus marinus (strain NATL2A).